Reading from the N-terminus, the 238-residue chain is Ribosomal RNA small subunit methyltransferase G (238 aa).

S-adenosyl-L-methionine contacts are provided by residues G77, F82, 128–129 (AE), and R147.

Belongs to the methyltransferase superfamily. RNA methyltransferase RsmG family.

It localises to the cytoplasm. Functionally, specifically methylates the N7 position of guanine in position 535 of 16S rRNA. This Exiguobacterium sp. (strain ATCC BAA-1283 / AT1b) protein is Ribosomal RNA small subunit methyltransferase G.